The following is an 87-amino-acid chain: Phytosulfokines 1 (87 aa).

Residues 1–24 (MMKTKSEVLIFFFTLVLLLSMASS) form the signal peptide. Residues 25 to 76 (VILREDGFAPPKPSPTTHEKASTKGDRDGVECKNSDSEEECLVKKTVAAHTD) constitute a propeptide that is removed on maturation. The disordered stretch occupies residues 31 to 59 (GFAPPKPSPTTHEKASTKGDRDGVECKNS). A compositionally biased stretch (basic and acidic residues) spans 41 to 59 (THEKASTKGDRDGVECKNS). Sulfotyrosine occurs at positions 77 and 79. A propeptide spanning residues 82–87 (DLNLSP) is cleaved from the precursor.

It belongs to the phytosulfokine family. Post-translationally, sulfation is important for activity and for the binding to a putative membrane receptor. In terms of processing, PSK-beta is produced from PSK-alpha by exopeptidase digestion. As to expression, expressed only in roots.

The protein localises to the secreted. In terms of biological role, promotes plant cell differentiation, organogenesis and somatic embryogenesis as well as cell proliferation. The chain is Phytosulfokines 1 (PSK1) from Arabidopsis thaliana (Mouse-ear cress).